Reading from the N-terminus, the 112-residue chain is UPF0375 protein R05A10.4 (112 aa).

The N-terminal stretch at 1 to 19 is a signal peptide; that stretch reads MNLSIFSAIIFSITIASSA. A glycan (N-linked (GlcNAc...) asparagine) is linked at asparagine 59.

It belongs to the UPF0375 family.

Its subcellular location is the secreted. This is UPF0375 protein R05A10.4 from Caenorhabditis elegans.